We begin with the raw amino-acid sequence, 242 residues long: Protein unc-119 homolog B-A (242 aa).

The span at 1-20 (MSGSKREAALTGQPKDERKK) shows a compositional bias: basic and acidic residues. The tract at residues 1–49 (MSGSKREAALTGQPKDERKKSGGGVINRLKARRVQGKESGTSDQSSVTP) is disordered. Residues 38–48 (ESGTSDQSSVT) show a composition bias toward polar residues. A tetradecanoate-binding site is contributed by Tyr133.

This sequence belongs to the PDE6D/unc-119 family.

Its function is as follows. Myristoyl-binding protein that acts as a cargo adapter: specifically binds the myristoyl moiety of a subset of N-terminally myristoylated proteins and is required for their localization. Plays a key role in localization of proteins to the primary cilium membrane. The protein is Protein unc-119 homolog B-A (unc119b-a) of Xenopus laevis (African clawed frog).